The following is a 338-amino-acid chain: 1-aminocyclopropane-1-carboxylate deaminase (338 aa).

Lys51 is subject to N6-(pyridoxal phosphate)lysine. Ser78 functions as the Nucleophile in the catalytic mechanism.

Belongs to the ACC deaminase/D-cysteine desulfhydrase family. Homotrimer. Pyridoxal 5'-phosphate serves as cofactor.

The catalysed reaction is 1-aminocyclopropane-1-carboxylate + H2O = 2-oxobutanoate + NH4(+). Functionally, catalyzes a cyclopropane ring-opening reaction, the irreversible conversion of 1-aminocyclopropane-1-carboxylate (ACC) to ammonia and alpha-ketobutyrate. Allows growth on ACC as a nitrogen source. This Pseudomonas fluorescens protein is 1-aminocyclopropane-1-carboxylate deaminase.